A 255-amino-acid chain; its full sequence is NAD kinase (255 aa).

Asp44 functions as the Proton acceptor in the catalytic mechanism. Residues 44–45, His49, 114–115, Asp144, Ala152, 155–160, and Gln216 contribute to the NAD(+) site; these read DG, NE, and SAYNLS.

This sequence belongs to the NAD kinase family. Requires a divalent metal cation as cofactor.

It localises to the cytoplasm. It carries out the reaction NAD(+) + ATP = ADP + NADP(+) + H(+). Its function is as follows. Involved in the regulation of the intracellular balance of NAD and NADP, and is a key enzyme in the biosynthesis of NADP. Catalyzes specifically the phosphorylation on 2'-hydroxyl of the adenosine moiety of NAD to yield NADP. This Rickettsia peacockii (strain Rustic) protein is NAD kinase.